Here is a 60-residue protein sequence, read N- to C-terminus: Small integral membrane protein 3 (60 aa).

The helical transmembrane segment at 20–40 (IWAIVLIILATVVIMTSLFLC) threads the bilayer.

The protein resides in the membrane. This Rattus norvegicus (Rat) protein is Small integral membrane protein 3 (Smim3).